The chain runs to 406 residues: Multifunctional CCA protein (406 aa).

ATP is bound by residues Gly8 and Arg11. Residues Gly8 and Arg11 each contribute to the CTP site. Asp21 and Asp23 together coordinate Mg(2+). Residues Arg91, Arg138, and Arg141 each coordinate ATP. CTP is bound by residues Arg91, Arg138, and Arg141. The 103-residue stretch at 229–331 (TGIHQEMVSD…LELLGRCDAL (103 aa)) folds into the HD domain.

Belongs to the tRNA nucleotidyltransferase/poly(A) polymerase family. Bacterial CCA-adding enzyme type 1 subfamily. Monomer. Can also form homodimers and oligomers. It depends on Mg(2+) as a cofactor. Requires Ni(2+) as cofactor.

It carries out the reaction a tRNA precursor + 2 CTP + ATP = a tRNA with a 3' CCA end + 3 diphosphate. The enzyme catalyses a tRNA with a 3' CCA end + 2 CTP + ATP = a tRNA with a 3' CCACCA end + 3 diphosphate. Its function is as follows. Catalyzes the addition and repair of the essential 3'-terminal CCA sequence in tRNAs without using a nucleic acid template. Adds these three nucleotides in the order of C, C, and A to the tRNA nucleotide-73, using CTP and ATP as substrates and producing inorganic pyrophosphate. tRNA 3'-terminal CCA addition is required both for tRNA processing and repair. Also involved in tRNA surveillance by mediating tandem CCA addition to generate a CCACCA at the 3' terminus of unstable tRNAs. While stable tRNAs receive only 3'-terminal CCA, unstable tRNAs are marked with CCACCA and rapidly degraded. The protein is Multifunctional CCA protein of Stenotrophomonas maltophilia (strain R551-3).